The following is a 316-amino-acid chain: Pantothenate kinase (316 aa).

An ATP-binding site is contributed by 95–102; sequence GSVAVGKS.

This sequence belongs to the prokaryotic pantothenate kinase family.

Its subcellular location is the cytoplasm. It catalyses the reaction (R)-pantothenate + ATP = (R)-4'-phosphopantothenate + ADP + H(+). Its pathway is cofactor biosynthesis; coenzyme A biosynthesis; CoA from (R)-pantothenate: step 1/5. This is Pantothenate kinase from Klebsiella pneumoniae subsp. pneumoniae (strain ATCC 700721 / MGH 78578).